We begin with the raw amino-acid sequence, 881 residues long: Plakophilin-2 (881 aa).

Residues 1 to 348 form a required for interaction with influenza A virus RNA polymerase subunit PB1 region; it reads MAAPGAPAEY…FTDSQLGNAD (348 aa). The required for binding to single-stranded DNA stretch occupies residues 1–360; sequence MAAPGAPAEY…MTLERAVSML (360 aa). At S44 the chain carries Phosphoserine. R46 is subject to Omega-N-methylarginine. Residue S82 is modified to Phosphoserine; by MARK3. A phosphoserine mark is found at S132, S135, S151, S154, S155, S169, and S172. Position 177 is a phosphothreonine (T177). 5 positions are modified to phosphoserine: S183, S197, S251, S294, and S329. Residues 282–314 form a disordered region; sequence QNRASRSSWHQSSFHSTRTLREAGPSVAVDSSG. A compositionally biased stretch (low complexity) spans 286-297; it reads SRSSWHQSSFHS. 8 ARM repeats span residues 341 to 383, 385 to 424, 427 to 467, 571 to 616, 671 to 711, 719 to 758, 763 to 804, and 807 to 849; these read DSQL…ECFQ, SEAR…NLVF, NDNK…NLRS, DGRK…NLSY, PKGV…NLTA, SVAQ…NLSR, QNEI…NIIQ, and YQNA…SLWA.

Belongs to the beta-catenin family. In terms of assembly, interacts with DSC2. Interacts with JUP. Interacts with KRT5/CK5, KRT8/CK8, KRT14/CK14, KRT18/CK18 and VIM. Interacts (via N-terminus) with MARK3/C-TAK1. Interacts with DSP. Interacts with DSG1, DSG2 and DSG3. Interacts (via N-terminus) with CTNNB1. Interacts with CDH1. Interacts with the RNA polymerase III (Pol III) complex proteins POLR3A/RPC155, POLR3F/RPC39 and POLR3C/RPC82. Interacts with CTNNA3. Interacts (via N-terminus) with SCN5A/Nav1.5. Interacts with ANK3/ANKG and GJA1/CX43. As to quaternary structure, (Microbial infection) Interacts (via N-terminus) with influenza A virus RNA polymerase subunit PB1 (via C-terminus); the interaction competitively inhibits the interaction between the subunits PB1 and PB2. Expressed at intercalated disks in the heart (at protein level). Expressed in gingival epithelial, endothelial and fibroblast cells (at protein level). Faintly expressed in tracheal epithelial cells (at protein level). Widely expressed. Found at desmosomal plaques in simple and stratified epithelia and in non-epithelial tissues such as myocardium and lymph node follicles. In most stratified epithelia found in the desmosomes of the basal cell layer and seems to be absent from suprabasal strata. As to expression, (Microbial infection) Abundantly expressed in tracheal epithelial cells following influenza A virus infection (at protein level).

It localises to the nucleus. The protein localises to the cell junction. Its subcellular location is the desmosome. It is found in the cytoplasm. Its function is as follows. A component of desmosome cell-cell junctions which are required for positive regulation of cellular adhesion. Regulates focal adhesion turnover resulting in changes in focal adhesion size, cell adhesion and cell spreading, potentially via transcriptional modulation of beta-integrins. Required to maintain gingival epithelial barrier function. Important component of the desmosome that is also required for localization of desmosome component proteins such as DSC2, DSG2 and JUP to the desmosome cell-cell junction. Required for the formation of desmosome cell junctions in cardiomyocytes, thereby required for the correct formation of the heart, specifically trabeculation and formation of the atria walls. Loss of desmosome cell junctions leads to mis-localization of DSP and DSG2 resulting in disruption of cell-cell adhesion and disordered intermediate filaments. Modulates profibrotic gene expression in cardiomyocytes via regulation of DSP expression and subsequent activation of downstream TGFB1 and MAPK14/p38 MAPK signaling. Required for cardiac sodium current propagation and electrical synchrony in cardiac myocytes, via ANK3 stabilization and modulation of SCN5A/Nav1.5 localization to cell-cell junctions. Required for mitochondrial function, nuclear envelope integrity and positive regulation of SIRT3 transcription via maintaining DES localization at its nuclear envelope and cell tip anchoring points, and thereby preserving regulation of the transcriptional program. Maintenance of nuclear envelope integrity protects against DNA damage and transcriptional dysregulation of genes, especially those involved in the electron transport chain, thereby preserving mitochondrial function and protecting against superoxide radical anion generation. Binds single-stranded DNA (ssDNA). May regulate the localization of GJA1 to gap junctions in intercalated disks of the heart. Involved in the inhibition of viral infection by influenza A viruses (IAV). Acts as a host restriction factor for IAV viral propagation, potentially via disrupting the interaction of IAV polymerase complex proteins. This chain is Plakophilin-2, found in Homo sapiens (Human).